The sequence spans 550 residues: Centrosomal and chromosomal factor (550 aa).

Coiled coils occupy residues 20-44 (SALSALQQQQQQQQQQHSQTQQQHH), 105-126 (VANSRQQQQQQQQQQQQQQQQQ), and 239-274 (ATSAQQQQQQQQRYQQQQQQLRQQHQQMSQMSQQAH). 4 disordered regions span residues 21 to 145 (ALSA…KDYS), 208 to 320 (LSSG…HAAN), 361 to 380 (SHYAAKGSGGGAGGGKRDAM), and 392 to 465 (SGKL…SASV). 3 stretches are compositionally biased toward low complexity: residues 24 to 71 (ALQQ…QQQQ), 81 to 136 (ANTS…NAAP), and 221 to 320 (AAVA…HAAN). Low complexity-rich tracts occupy residues 396 to 412 (QQSQVQQQQPQQQQQHC) and 450 to 462 (SATPTAGAASGGS).

In terms of assembly, homodimer. Interacts with esc, Trl, E(z), scm and ph-p in vitro. Found in vivo in an esc-containing complex, which may be the Esc/E(z) complex. Also found in vivo in a Pc-containing complex that may be the PRC1 complex, but does not interact with Pc directly. Interacts with cyclin CycG.

It is found in the nucleus. The protein resides in the cytoplasm. Its subcellular location is the cytoskeleton. The protein localises to the microtubule organizing center. It localises to the centrosome. It is found in the chromosome. Its function is as follows. Essential protein required for proper condensation of mitotic chromosomes and progression through mitosis. Binds to specific polytene chromosome sites, many of which are shared with the posterior sex combs (Psc) protein. Involved in maintaining Abd-B repression outside its normal expression domain. The polypeptide is Centrosomal and chromosomal factor (corto) (Drosophila melanogaster (Fruit fly)).